The sequence spans 403 residues: Argininosuccinate synthase (403 aa).

Position 10 to 18 (Ala-10 to Ser-18) interacts with ATP. L-citrulline is bound at residue Tyr-89. Gly-119 is an ATP binding site. 3 residues coordinate L-aspartate: Thr-121, Asn-125, and Asp-126. Asn-125 serves as a coordination point for L-citrulline. L-citrulline contacts are provided by Arg-129, Ser-177, Ser-186, Glu-262, and Tyr-274.

Belongs to the argininosuccinate synthase family. Type 1 subfamily. As to quaternary structure, homotetramer.

The protein resides in the cytoplasm. The enzyme catalyses L-citrulline + L-aspartate + ATP = 2-(N(omega)-L-arginino)succinate + AMP + diphosphate + H(+). It participates in amino-acid biosynthesis; L-arginine biosynthesis; L-arginine from L-ornithine and carbamoyl phosphate: step 2/3. The chain is Argininosuccinate synthase from Synechococcus sp. (strain JA-3-3Ab) (Cyanobacteria bacterium Yellowstone A-Prime).